Here is a 316-residue protein sequence, read N- to C-terminus: DDRGK domain-containing protein 1 (316 aa).

Residues 1-3 (MVE) are Lumenal-facing. Residues 4-24 (LDYLFLGSVGFLTIALMLIIL) form a helical membrane-spanning segment. Residues 25 to 316 (RIIKLYFDEK…VEHVSELTAA (292 aa)) are Cytoplasmic-facing. The segment at 147–187 (LEQEKEKRLQKEREKQMEQEEEERKRKCREREEREKREEEE) is disordered.

The protein belongs to the DDRGK1 family.

The protein resides in the endoplasmic reticulum membrane. In terms of biological role, substrate adapter for ufmylation, the covalent attachment of the ubiquitin-like modifier UFM1 to substrate proteins. The polypeptide is DDRGK domain-containing protein 1 (Brugia malayi (Filarial nematode worm)).